The sequence spans 151 residues: Small ribosomal subunit protein uS19 (151 aa).

Residues 1 to 23 form a disordered region; sequence MVVNKQGSVKSIKRKARKSRKVT. Over residues 11-23 the composition is skewed to basic residues; that stretch reads SIKRKARKSRKVT.

This sequence belongs to the universal ribosomal protein uS19 family.

Functionally, protein S19 forms a complex with S13 that binds strongly to the 16S ribosomal RNA. This chain is Small ribosomal subunit protein uS19 (rps19), found in Thermoplasma volcanium (strain ATCC 51530 / DSM 4299 / JCM 9571 / NBRC 15438 / GSS1).